The primary structure comprises 370 residues: 3-isopropylmalate dehydrogenase (370 aa).

An NAD(+)-binding site is contributed by Gly-77–Glu-90. Residues Arg-97, Arg-107, Arg-135, and Asp-226 each coordinate substrate. Residues Asp-226, Asp-250, and Asp-254 each coordinate Mg(2+). Gly-290–Asn-302 provides a ligand contact to NAD(+).

This sequence belongs to the isocitrate and isopropylmalate dehydrogenases family. LeuB type 1 subfamily. As to quaternary structure, homodimer. The cofactor is Mg(2+). It depends on Mn(2+) as a cofactor.

It localises to the cytoplasm. It catalyses the reaction (2R,3S)-3-isopropylmalate + NAD(+) = 4-methyl-2-oxopentanoate + CO2 + NADH. It functions in the pathway amino-acid biosynthesis; L-leucine biosynthesis; L-leucine from 3-methyl-2-oxobutanoate: step 3/4. Catalyzes the oxidation of 3-carboxy-2-hydroxy-4-methylpentanoate (3-isopropylmalate) to 3-carboxy-4-methyl-2-oxopentanoate. The product decarboxylates to 4-methyl-2 oxopentanoate. The protein is 3-isopropylmalate dehydrogenase of Nitrobacter winogradskyi (strain ATCC 25391 / DSM 10237 / CIP 104748 / NCIMB 11846 / Nb-255).